The primary structure comprises 79 residues: Ixosin (79 aa).

The propeptide at 1–56 (MSAHKVQIGLSSGQFRVALQVPSVRLKGLGSFHTGSIVLPSQGSLREDQISLHNQD) is removed in mature form.

Has antifungal activity against C.albicans. Has antibacterial activity against the Gram-positive bacterium S.aureus and the Gram-negative bacterium E.coli. Lacks hemolytic activity against rabbit erythrocytes. In Ixodes sinensis (Hard tick), this protein is Ixosin.